The sequence spans 189 residues: Haloacid dehalogenase-like hydrolase domain-containing protein 3 (189 aa).

It belongs to the HAD-like hydrolase superfamily.

This chain is Haloacid dehalogenase-like hydrolase domain-containing protein 3 (hdhd3), found in Xenopus tropicalis (Western clawed frog).